Here is a 176-residue protein sequence, read N- to C-terminus: ATP synthase subunit delta (176 aa).

It belongs to the ATPase delta chain family. As to quaternary structure, F-type ATPases have 2 components, F(1) - the catalytic core - and F(0) - the membrane proton channel. F(1) has five subunits: alpha(3), beta(3), gamma(1), delta(1), epsilon(1). F(0) has three main subunits: a(1), b(2) and c(10-14). The alpha and beta chains form an alternating ring which encloses part of the gamma chain. F(1) is attached to F(0) by a central stalk formed by the gamma and epsilon chains, while a peripheral stalk is formed by the delta and b chains.

The protein resides in the cell inner membrane. In terms of biological role, f(1)F(0) ATP synthase produces ATP from ADP in the presence of a proton or sodium gradient. F-type ATPases consist of two structural domains, F(1) containing the extramembraneous catalytic core and F(0) containing the membrane proton channel, linked together by a central stalk and a peripheral stalk. During catalysis, ATP synthesis in the catalytic domain of F(1) is coupled via a rotary mechanism of the central stalk subunits to proton translocation. This protein is part of the stalk that links CF(0) to CF(1). It either transmits conformational changes from CF(0) to CF(1) or is implicated in proton conduction. The protein is ATP synthase subunit delta of Campylobacter concisus (strain 13826).